Consider the following 372-residue polypeptide: D-alanine--D-alanine ligase (372 aa).

One can recognise an ATP-grasp domain in the interval 145–349; it reads KTVLRAGGIP…CPNLLDQLIE (205 aa). 176-231 contributes to the ATP binding site; sequence DRWGTSELFVKAVSLGSSVATLPVKTETEFTKAVKEVFRYDDRLMVEPRIRGREIE. Mg(2+)-binding residues include aspartate 303, glutamate 316, and asparagine 318.

Belongs to the D-alanine--D-alanine ligase family. Requires Mg(2+) as cofactor. The cofactor is Mn(2+).

The protein resides in the cytoplasm. The enzyme catalyses 2 D-alanine + ATP = D-alanyl-D-alanine + ADP + phosphate + H(+). It functions in the pathway cell wall biogenesis; peptidoglycan biosynthesis. Functionally, cell wall formation. This chain is D-alanine--D-alanine ligase, found in Coxiella burnetii (strain CbuK_Q154) (Coxiella burnetii (strain Q154)).